We begin with the raw amino-acid sequence, 361 residues long: Caveolae-associated protein 4 (361 aa).

Residues 1–21 (MEHNGSASNADKIHQNRLSNV) form a disordered region. The stretch at 100 to 124 (IKDVKARVEKQQTHVKKVEAKQEEI) forms a coiled coil. Ser152, Ser171, and Ser172 each carry phosphoserine. Positions 204–248 (ENMQKTRQNFDKKVNRIRTRIVTPERRERLRQSGERLRQSGERLK) form a coiled coil. The segment covering 230–255 (RERLRQSGERLRQSGERLKQSGERFK) has biased composition (basic and acidic residues). 2 disordered regions span residues 230 to 283 (RERL…AVAE) and 310 to 346 (PEALSETDPEEASATHPPQEGGEVSTPEPLKVTFKPQ). Position 335 is a phosphothreonine (Thr335). A Phosphoserine modification is found at Ser354.

The protein belongs to the CAVIN family. Component of the CAVIN complex composed of CAVIN1, CAVIN2, CAVIN3 and CAVIN4. Interacts with CAVIN1, ADRA1A, ADRA1B, MAPK1 and MAPK3. Interacts with CAVIN2; this augments the transactivation of NPPA.

It is found in the cytoplasm. The protein localises to the myofibril. The protein resides in the sarcomere. It localises to the cytosol. Its subcellular location is the cell membrane. It is found in the sarcolemma. The protein localises to the membrane. The protein resides in the caveola. Functionally, modulates the morphology of formed caveolae in cardiomyocytes, but is not required for caveolar formation. Facilitates the recruitment of MAPK1/3 to caveolae within cardiomyocytes and regulates alpha-1 adrenergic receptor-induced hypertrophic responses in cardiomyocytes through MAPK1/3 activation. Contributes to proper membrane localization and stabilization of caveolin-3 (CAV3) in cardiomyocytes. Induces RHOA activation and activates NPPA transcription and myofibrillar organization through the Rho/ROCK signaling pathway. The sequence is that of Caveolae-associated protein 4 (CAVIN4) from Bos taurus (Bovine).